The following is a 726-amino-acid chain: Ribonuclease R (726 aa).

The RNB domain maps to 264 to 592 (RKDLTELAFV…TVHRLLWMNL (329 aa)). Positions 645–726 (GQTFHGFISA…VQKRAILTLV (82 aa)) constitute an S1 motif domain.

Belongs to the RNR ribonuclease family. RNase R subfamily.

The protein localises to the cytoplasm. The catalysed reaction is Exonucleolytic cleavage in the 3'- to 5'-direction to yield nucleoside 5'-phosphates.. 3'-5' exoribonuclease that releases 5'-nucleoside monophosphates and is involved in maturation of structured RNAs. The polypeptide is Ribonuclease R (Mycoplasma pneumoniae (strain ATCC 29342 / M129 / Subtype 1) (Mycoplasmoides pneumoniae)).